The chain runs to 981 residues: Colossin-C (981 aa).

An N-terminal signal peptide occupies residues 1 to 23 (MKILYSLLLISSIILNTVLNISS). An N-linked (GlcNAc...) asparagine glycan is attached at N63. Residues 172–195 (EQTQPPTQPPTQPPTQPPTPPPFT) are disordered. A compositionally biased stretch (pro residues) spans 177–194 (PTQPPTQPPTQPPTPPPF). 3 N-linked (GlcNAc...) asparagine glycosylation sites follow: N222, N591, and N811.

This sequence belongs to the serine-aspartate repeat-containing protein (SDr) family.

Its subcellular location is the secreted. This is Colossin-C (colC) from Dictyostelium discoideum (Social amoeba).